The primary structure comprises 257 residues: Ubiquinone biosynthesis O-methyltransferase (257 aa).

4 residues coordinate S-adenosyl-L-methionine: R43, G77, D98, and M144.

Belongs to the methyltransferase superfamily. UbiG/COQ3 family.

It catalyses the reaction a 3-demethylubiquinol + S-adenosyl-L-methionine = a ubiquinol + S-adenosyl-L-homocysteine + H(+). It carries out the reaction a 3-(all-trans-polyprenyl)benzene-1,2-diol + S-adenosyl-L-methionine = a 2-methoxy-6-(all-trans-polyprenyl)phenol + S-adenosyl-L-homocysteine + H(+). The protein operates within cofactor biosynthesis; ubiquinone biosynthesis. In terms of biological role, O-methyltransferase that catalyzes the 2 O-methylation steps in the ubiquinone biosynthetic pathway. This is Ubiquinone biosynthesis O-methyltransferase from Psychrobacter cryohalolentis (strain ATCC BAA-1226 / DSM 17306 / VKM B-2378 / K5).